We begin with the raw amino-acid sequence, 183 residues long: Cuticle protein 2 (183 aa).

The N-terminal stretch at 1-15 (MKLIVVAALIGVCAG) is a signal peptide. The region spanning 58–121 (SQGFQYVYDT…AQGAHLPTPP (64 aa)) is the Chitin-binding type R&amp;R domain.

This Lonomia obliqua (Moth) protein is Cuticle protein 2.